Consider the following 457-residue polypeptide: Exodeoxyribonuclease 7 large subunit (457 aa).

Belongs to the XseA family. As to quaternary structure, heterooligomer composed of large and small subunits.

The protein resides in the cytoplasm. The catalysed reaction is Exonucleolytic cleavage in either 5'- to 3'- or 3'- to 5'-direction to yield nucleoside 5'-phosphates.. Its function is as follows. Bidirectionally degrades single-stranded DNA into large acid-insoluble oligonucleotides, which are then degraded further into small acid-soluble oligonucleotides. The sequence is that of Exodeoxyribonuclease 7 large subunit from Citrobacter koseri (strain ATCC BAA-895 / CDC 4225-83 / SGSC4696).